The following is a 477-amino-acid chain: P3 protein (477 aa).

Residues M1–G21 are disordered. Transmembrane regions (helical) follow at residues P225–A245, A253–F273, V281–L301, I320–I340, V361–I381, L383–L403, V417–L437, and F450–Y470.

Belongs to the bile acid:sodium symporter (BASS) (TC 2.A.28) family.

The protein resides in the membrane. Functionally, the ubiquitous expression and the conservation of the sequence in distant animal species suggest that the gene codes for a protein with housekeeping functions. This chain is P3 protein (SLC10A3), found in Homo sapiens (Human).